We begin with the raw amino-acid sequence, 239 residues long: MKKTELLYEGKAKKIWKTDDENILIAEFKDSLTAFDAQKKSEEAGKGALNCKISANLFKLLEEQGIKTHFVECISENEMVIKKAEMIMIEVVVRNIATGSLTKRLGIPDGTKLPFALVEFYYKNDALHDPLINDEHALILELVDHESELEELKRLGREINVVLKSFFDKANLNLVDFKVEFGKDSEGNIILADEISPDSCRFWDKTSGEKLDKDLFRHDLGNVKVAYEEVLKRITKVMQ.

It belongs to the SAICAR synthetase family.

It carries out the reaction 5-amino-1-(5-phospho-D-ribosyl)imidazole-4-carboxylate + L-aspartate + ATP = (2S)-2-[5-amino-1-(5-phospho-beta-D-ribosyl)imidazole-4-carboxamido]succinate + ADP + phosphate + 2 H(+). It functions in the pathway purine metabolism; IMP biosynthesis via de novo pathway; 5-amino-1-(5-phospho-D-ribosyl)imidazole-4-carboxamide from 5-amino-1-(5-phospho-D-ribosyl)imidazole-4-carboxylate: step 1/2. This Nitratiruptor sp. (strain SB155-2) protein is Phosphoribosylaminoimidazole-succinocarboxamide synthase.